The sequence spans 107 residues: Pre-mRNA-splicing factor RDS3 (107 aa).

The protein belongs to the PHF5 family. As to quaternary structure, component of the spliceosome where it interacts with CUS1, HSH49, HSH155, IST3 and RSE1. Also interacts with YRA1.

Its subcellular location is the nucleus. In terms of biological role, required for pre-mRNA splicing. Involved in regulation of drug sensitivity and may play a role in multidrug resistance. This Saccharomyces cerevisiae (strain ATCC 204508 / S288c) (Baker's yeast) protein is Pre-mRNA-splicing factor RDS3 (RDS3).